A 313-amino-acid chain; its full sequence is MMENYKHTTVLLDEAVNGLNIRPDGIYIDGTFGRGGHSRLILSRLGAEGRLLAIDRDPQAIAVAQTIDDPRFSIVHGPFSQLAEYVGERNLTGKIDGILLDLGVSSPQLDDAERGFSFMRDGPLDMRMDPTRGQSAAEWLQTAEEDDIAWVIKTFGEERFGKRIARAIVERNRIQPMTRTKELAEVIAAAMPVKDKHKHPATRTFQAVRIWVNSELEEIEQALKSSLSVLAPGGRLSIISFHSLEDRIVKRFMREQSRGPQVPAGIPMTEAQLKKLGGRELRALGKLMPGEEEVAENPRARSSVLRIAERTNA.

Residues 35 to 37, D55, F79, D101, and Q108 contribute to the S-adenosyl-L-methionine site; that span reads GGH.

This sequence belongs to the methyltransferase superfamily. RsmH family.

The protein resides in the cytoplasm. It catalyses the reaction cytidine(1402) in 16S rRNA + S-adenosyl-L-methionine = N(4)-methylcytidine(1402) in 16S rRNA + S-adenosyl-L-homocysteine + H(+). In terms of biological role, specifically methylates the N4 position of cytidine in position 1402 (C1402) of 16S rRNA. This is Ribosomal RNA small subunit methyltransferase H from Klebsiella pneumoniae subsp. pneumoniae (strain ATCC 700721 / MGH 78578).